Here is a 455-residue protein sequence, read N- to C-terminus: Putative FBD-associated F-box protein At5g56400 (455 aa).

The F-box domain occupies 32–81 (VDKISDLPEDLLVHILSLLPTTNDIVATSGVSKRWESLWTKVHKLRFNDR). The 50-residue stretch at 372–421 (WNQQPSYVPECLTKSLEIFEWRNYKATFRERDVAVYILKNSTCLKKTVIS) folds into the FBD domain.

The chain is Putative FBD-associated F-box protein At5g56400 from Arabidopsis thaliana (Mouse-ear cress).